We begin with the raw amino-acid sequence, 101 residues long: Protein RnfH (101 aa).

The protein belongs to the UPF0125 (RnfH) family.

This is Protein RnfH from Coxiella burnetii (strain CbuG_Q212) (Coxiella burnetii (strain Q212)).